A 117-amino-acid chain; its full sequence is Cell cycle protein GpsB (117 aa).

Residues 32–70 (LDNVIKDYDAFVKENQRLQDENERLLAKVDELTRQVQVG) are a coiled coil.

Belongs to the GpsB family. Forms polymers through the coiled coil domains. Interacts with PBP1, MreC and EzrA.

The protein localises to the cytoplasm. Its function is as follows. Divisome component that associates with the complex late in its assembly, after the Z-ring is formed, and is dependent on DivIC and PBP2B for its recruitment to the divisome. Together with EzrA, is a key component of the system that regulates PBP1 localization during cell cycle progression. Its main role could be the removal of PBP1 from the cell pole after pole maturation is completed. Also contributes to the recruitment of PBP1 to the division complex. Not essential for septum formation. In Levilactobacillus brevis (strain ATCC 367 / BCRC 12310 / CIP 105137 / JCM 1170 / LMG 11437 / NCIMB 947 / NCTC 947) (Lactobacillus brevis), this protein is Cell cycle protein GpsB.